We begin with the raw amino-acid sequence, 61 residues long: Small ribosomal subunit protein uS14B (61 aa).

Residues cysteine 24, cysteine 27, cysteine 40, and cysteine 43 each coordinate Zn(2+).

Belongs to the universal ribosomal protein uS14 family. Zinc-binding uS14 subfamily. In terms of assembly, part of the 30S ribosomal subunit. Contacts proteins S3 and S10. Zn(2+) is required as a cofactor.

Its function is as follows. Binds 16S rRNA, required for the assembly of 30S particles and may also be responsible for determining the conformation of the 16S rRNA at the A site. In Saccharopolyspora erythraea (strain ATCC 11635 / DSM 40517 / JCM 4748 / NBRC 13426 / NCIMB 8594 / NRRL 2338), this protein is Small ribosomal subunit protein uS14B.